The primary structure comprises 199 residues: Fe/S biogenesis protein NfuA (199 aa).

[4Fe-4S] cluster is bound by residues Cys156 and Cys159.

The protein belongs to the NfuA family. In terms of assembly, homodimer. The cofactor is [4Fe-4S] cluster.

Its function is as follows. Involved in iron-sulfur cluster biogenesis. Binds a 4Fe-4S cluster, can transfer this cluster to apoproteins, and thereby intervenes in the maturation of Fe/S proteins. Could also act as a scaffold/chaperone for damaged Fe/S proteins. The chain is Fe/S biogenesis protein NfuA from Haemophilus ducreyi (strain 35000HP / ATCC 700724).